We begin with the raw amino-acid sequence, 41 residues long: Histone H3.2 (41 aa).

The disordered stretch occupies residues 1 to 41 (MARTKQTARKSTGAKAPRKQLASKAARKSAPATGGIKKPHR).

This sequence belongs to the histone H3 family. As to quaternary structure, the nucleosome is a histone octamer containing two molecules each of H2A, H2B, H3 and H4 assembled in one H3-H4 heterotetramer and two H2A-H2B heterodimers. The octamer wraps approximately 147 bp of DNA.

The protein resides in the nucleus. The protein localises to the chromosome. Functionally, core component of nucleosome. Nucleosomes wrap and compact DNA into chromatin, limiting DNA accessibility to the cellular machineries which require DNA as a template. Histones thereby play a central role in transcription regulation, DNA repair, DNA replication and chromosomal stability. DNA accessibility is regulated via a complex set of post-translational modifications of histones, also called histone code, and nucleosome remodeling. This chain is Histone H3.2, found in Tetrahymena australis.